The chain runs to 214 residues: ER lumen protein-retaining receptor 3 (214 aa).

Residues 1-4 (MNIF) are Lumenal-facing. Residues 5–24 (RILGDVSHLLAIIILLLKMW) form a helical membrane-spanning segment. The Cytoplasmic segment spans residues 25-32 (KSKSCAGI). Residues 33 to 52 (SGKSQLLFALVFTTRYLDLF) form a helical membrane-spanning segment. Residues 47-48 (RY) are interaction with the K-D-E-L motif on target proteins. The Lumenal portion of the chain corresponds to 53–58 (TVFISP). The helical transmembrane segment at 59-79 (YNTVMKIIFLACAYVTVYLIY) threads the bilayer. Topologically, residues 80–92 (GKLRKSYDSENDT) are cytoplasmic. A helical membrane pass occupies residues 93 to 110 (FRLEFLLVPVIGLSFLEN). Over 111–116 (YEFTPL) the chain is Lumenal. A helical transmembrane segment spans residues 117-135 (EILWTFSIYLESVAILPQL). The Cytoplasmic segment spans residues 136-149 (FMISKTGEAESITT). Residues 150–168 (HYLFFLGLYRVLYLANWIW) form a helical membrane-spanning segment. Positions 159 to 169 (RVLYLANWIWR) are interaction with the K-D-E-L motif on target proteins. At 169 to 178 (RYHTEKFYDQ) the chain is on the lumenal side. A helical membrane pass occupies residues 179-199 (IAVVSGVVQTIFYFDFFYLYV). Residues 200 to 214 (TKVLKGKKLSLPMPV) are Cytoplasmic-facing. Residues 204–207 (KGKK) form an important for recycling of cargo proteins with the sequence motif K-D-E-L from the Golgi to the endoplasmic reticulum region.

It belongs to the ERD2 family.

It localises to the endoplasmic reticulum membrane. The protein resides in the golgi apparatus membrane. The protein localises to the cytoplasmic vesicle. It is found in the COPI-coated vesicle membrane. Functionally, receptor for the C-terminal sequence motif K-D-E-L that is present on endoplasmic reticulum resident proteins and that mediates their recycling from the Golgi back to the endoplasmic reticulum. The protein is ER lumen protein-retaining receptor 3 (kdelr3) of Xenopus laevis (African clawed frog).